A 395-amino-acid chain; its full sequence is MATAQLQRTSMSALVFPNKISTEQQSLVLVKRLLAVSVSCITYLRGIFPECAYGTRYLDDLCVKILREDKNCPGSTQLVKWMLGCYDALQKKYLRMVVLAVYTNPEDPQTISECYQFKFKYASNGPVMDFISKNQSSESSMSSADTKKASILLIRKIYILMQNLGPLPNDVCLTMKLFYYDEVTPPDYQPPGFKDGDCEGVIFEGEPMYLNVGEVPTPFHTFKVKVTTEKERMENIDSAILSPKQLKTPLQKILMDKDDVADEQEHYISDDFDVETKMEEQKRNLGSSELGEPSLVCEEDEIMRSKESLDLSISHSQVEQLVSKTSELDVSESKTRSGKIFQNKMANGNQPVKSSKENRKRNQLESGKTVLYHFDSSSQESVPKRRKFSEPKEYV.

An HORMA domain is found at 24 to 226 (QQSLVLVKRL…TPFHTFKVKV (203 aa)). Residues 329 to 395 (DVSESKTRSG…RKFSEPKEYV (67 aa)) form a disordered region. Positions 344-353 (KMANGNQPVK) are enriched in polar residues. Residues 354–363 (SSKENRKRNQ) show a composition bias toward basic and acidic residues. The residue at position 377 (Ser377) is a Phosphoserine. The short motif at 384 to 387 (KRRK) is the Nuclear localization signal element.

Interacts with HORMAD2. Interacts with IHO1. Phosphorylated at Ser-378 in a SPO11-dependent manner.

It is found in the nucleus. The protein localises to the chromosome. In terms of biological role, plays a key role in meiotic progression. Regulates 3 different functions during meiosis: ensures that sufficient numbers of processed DNA double-strand breaks (DSBs) are available for successful homology search by increasing the steady-state numbers of single-stranded DSB ends. Promotes synaptonemal-complex formation independently of its role in homology search. Plays a key role in the male mid-pachytene checkpoint and the female meiotic prophase checkpoint: required for efficient build-up of ATR activity on unsynapsed chromosome regions, a process believed to form the basis of meiotic silencing of unsynapsed chromatin (MSUC) and meiotic prophase quality control in both sexes. In Canis lupus familiaris (Dog), this protein is HORMA domain-containing protein 1 (HORMAD1).